A 514-amino-acid polypeptide reads, in one-letter code: Cobyric acid synthase (514 aa).

The region spanning 258-458 (ALMVGVVRLP…IHGIFDNDGL (201 aa)) is the GATase cobBQ-type domain. C339 (nucleophile) is an active-site residue. H450 is an active-site residue.

The protein belongs to the CobB/CobQ family. CobQ subfamily.

It participates in cofactor biosynthesis; adenosylcobalamin biosynthesis. Its function is as follows. Catalyzes amidations at positions B, D, E, and G on adenosylcobyrinic A,C-diamide. NH(2) groups are provided by glutamine, and one molecule of ATP is hydrogenolyzed for each amidation. The protein is Cobyric acid synthase of Syntrophobacter fumaroxidans (strain DSM 10017 / MPOB).